The following is a 749-amino-acid chain: Small G protein signaling modulator 3 (749 aa).

A Rab-GAP TBC domain is found at 113 to 304 (GIPHGMRPQL…RIWDLFFYEG (192 aa)). Ser-405 bears the Phosphoserine mark. Residues 414–438 (EDDLEALKAKNIKQTELVADLREAI) are a coiled coil. The SH3 domain maps to 479–538 (SHRRRAKALLDFERHDDDELGFRKNDIITIISQKDEHCWVGELNGLRGWFPAKFVEVLDE). Positions 554–717 (GVTDLVRGTL…FAFSLSQDWE (164 aa)) constitute an RUN domain.

Belongs to the small G protein signaling modulator family. As to quaternary structure, interacts with GJA1. Interaction with GJA1 induces its degradation. Interacts (via RUN domain) with NF2 (via C-terminus). Interacts with RAB3A, RAB4A, RAB5A, RAB8A, RAB11A, RAP1A, RAP1B, RAP2A, RAP2B and PDCD6I. No interaction with RAB27A. No interaction with GJB1 or GJD2. Expressed in brain, liver, kidney and testis. Moderately expressed in heart, very weakly in lung and muscle. Not expressed in spleen.

The protein resides in the cytoplasm. May play a cooperative role in NF2-mediated growth suppression of cells. May act as a modulator of small G protein RAB- and RAP-mediated neuronal signal transduction and vesicular transportation pathways. This chain is Small G protein signaling modulator 3, found in Rattus norvegicus (Rat).